The sequence spans 210 residues: Pyridoxine/pyridoxamine 5'-phosphate oxidase (210 aa).

Substrate is bound by residues 7 to 10 and Lys-65; that span reads REDY. Residues 60–65, 75–76, Arg-81, Lys-82, and Gln-104 each bind FMN; these read RMVLLK and FT. Residues Tyr-122, Arg-126, and Ser-130 each contribute to the substrate site. FMN-binding positions include 139 to 140 and Trp-183; that span reads QS. Substrate is bound at residue 189–191; sequence RLH. Arg-193 is a binding site for FMN.

This sequence belongs to the pyridoxamine 5'-phosphate oxidase family. In terms of assembly, homodimer. Requires FMN as cofactor.

It catalyses the reaction pyridoxamine 5'-phosphate + O2 + H2O = pyridoxal 5'-phosphate + H2O2 + NH4(+). The enzyme catalyses pyridoxine 5'-phosphate + O2 = pyridoxal 5'-phosphate + H2O2. Its pathway is cofactor metabolism; pyridoxal 5'-phosphate salvage; pyridoxal 5'-phosphate from pyridoxamine 5'-phosphate: step 1/1. It functions in the pathway cofactor metabolism; pyridoxal 5'-phosphate salvage; pyridoxal 5'-phosphate from pyridoxine 5'-phosphate: step 1/1. Its function is as follows. Catalyzes the oxidation of either pyridoxine 5'-phosphate (PNP) or pyridoxamine 5'-phosphate (PMP) into pyridoxal 5'-phosphate (PLP). This chain is Pyridoxine/pyridoxamine 5'-phosphate oxidase, found in Neisseria gonorrhoeae (strain ATCC 700825 / FA 1090).